A 270-amino-acid polypeptide reads, in one-letter code: uncharacterized protein (270 aa).

This is an uncharacterized protein from Archaeoglobus fulgidus (strain ATCC 49558 / DSM 4304 / JCM 9628 / NBRC 100126 / VC-16).